Consider the following 145-residue polypeptide: Synaptojanin-2-binding protein (145 aa).

Residues 1-117 (MNGRVDYLVT…GHRGEGDPSG (117 aa)) are Cytoplasmic-facing. A PDZ domain is found at 13–100 (EINLTRGPSG…AVSLRVQHRL (88 aa)). The chain crosses the membrane as a helical span at residues 118–138 (IPIFMVLVPVFALTMVAAWAF). The Mitochondrial intermembrane segment spans residues 139 to 145 (MRYRQQL).

In terms of assembly, binds (via the PDZ domain) to isoform 2A of SYNJ2 (via the unique motif in the C-terminus). Interacts (via C-terminus) with RALBP1. Interacts (via PDZ domain) with ACVR2A (via C-terminus) and ACVR2B (via C-terminus). Forms a ternary complex with ACVR2A and RALBP1. Interacts with MAPK12. Interacts with DLL1; enhances DLL1 protein stability, and promotes notch signaling in endothelial cells.

Its subcellular location is the mitochondrion outer membrane. Its function is as follows. Regulates endocytosis of activin type 2 receptor kinases through the Ral/RALBP1-dependent pathway and may be involved in suppression of activin-induced signal transduction. The polypeptide is Synaptojanin-2-binding protein (SYNJ2BP) (Homo sapiens (Human)).